The primary structure comprises 150 residues: 3-hydroxyacyl-[acyl-carrier-protein] dehydratase FabZ (150 aa).

The active site involves His51.

It belongs to the thioester dehydratase family. FabZ subfamily.

Its subcellular location is the cytoplasm. It catalyses the reaction a (3R)-hydroxyacyl-[ACP] = a (2E)-enoyl-[ACP] + H2O. In terms of biological role, involved in unsaturated fatty acids biosynthesis. Catalyzes the dehydration of short chain beta-hydroxyacyl-ACPs and long chain saturated and unsaturated beta-hydroxyacyl-ACPs. The protein is 3-hydroxyacyl-[acyl-carrier-protein] dehydratase FabZ of Geobacter metallireducens (strain ATCC 53774 / DSM 7210 / GS-15).